Reading from the N-terminus, the 464-residue chain is 3-isopropylmalate dehydratase large subunit (464 aa).

[4Fe-4S] cluster contacts are provided by cysteine 337, cysteine 397, and cysteine 400.

This sequence belongs to the aconitase/IPM isomerase family. LeuC type 1 subfamily. In terms of assembly, heterodimer of LeuC and LeuD. The cofactor is [4Fe-4S] cluster.

The enzyme catalyses (2R,3S)-3-isopropylmalate = (2S)-2-isopropylmalate. The protein operates within amino-acid biosynthesis; L-leucine biosynthesis; L-leucine from 3-methyl-2-oxobutanoate: step 2/4. Its function is as follows. Catalyzes the isomerization between 2-isopropylmalate and 3-isopropylmalate, via the formation of 2-isopropylmaleate. In Bacillus cereus (strain ATCC 10987 / NRS 248), this protein is 3-isopropylmalate dehydratase large subunit.